The following is a 149-amino-acid chain: Large ribosomal subunit protein eL8 (149 aa).

Belongs to the eukaryotic ribosomal protein eL8 family. As to quaternary structure, part of the 50S ribosomal subunit. Probably part of the RNase P complex.

It is found in the cytoplasm. Multifunctional RNA-binding protein that recognizes the K-turn motif in ribosomal RNA, the RNA component of RNase P, box H/ACA, box C/D and box C'/D' sRNAs. This chain is Large ribosomal subunit protein eL8, found in Pyrobaculum calidifontis (strain DSM 21063 / JCM 11548 / VA1).